A 356-amino-acid chain; its full sequence is Fructose-1,6-bisphosphatase class 1 (356 aa).

Mg(2+)-binding residues include E91, D113, L115, and D116. Substrate is bound by residues 116–119 (DGSS) and N208. E280 provides a ligand contact to Mg(2+).

This sequence belongs to the FBPase class 1 family. Homotetramer. It depends on Mg(2+) as a cofactor.

It localises to the cytoplasm. It catalyses the reaction beta-D-fructose 1,6-bisphosphate + H2O = beta-D-fructose 6-phosphate + phosphate. It functions in the pathway carbohydrate biosynthesis; gluconeogenesis. This Methylacidiphilum infernorum (isolate V4) (Methylokorus infernorum (strain V4)) protein is Fructose-1,6-bisphosphatase class 1.